The sequence spans 95 residues: Small ribosomal subunit protein bS6 (95 aa).

It belongs to the bacterial ribosomal protein bS6 family.

Its function is as follows. Binds together with bS18 to 16S ribosomal RNA. This chain is Small ribosomal subunit protein bS6, found in Acholeplasma laidlawii (strain PG-8A).